The sequence spans 114 residues: Ig heavy chain V-A2 region BS-1 (114 aa).

Gln1 carries the pyrrolidone carboxylic acid modification. Residues 1–107 (QSVKESEGGL…YLGLMDVWGP (107 aa)) form the Ig-like domain.

The chain is Ig heavy chain V-A2 region BS-1 from Oryctolagus cuniculus (Rabbit).